Reading from the N-terminus, the 171-residue chain is UPF0763 protein KHP_0657 (171 aa).

It belongs to the UPF0763 family.

The protein is UPF0763 protein KHP_0657 of Helicobacter pylori (strain 51).